We begin with the raw amino-acid sequence, 390 residues long: Stearoyl-[acyl-carrier-protein] 9-desaturase 5, chloroplastic (390 aa).

The interval 1-22 (MAFAASHTASPSSCGGVAQRRS) is disordered. The transit peptide at 1–31 (MAFAASHTASPSSCGGVAQRRSNGMSPVVAM) directs the protein to the chloroplast. Fe cation contacts are provided by Glu132, Glu170, His173, Glu223, Glu256, and His259.

The protein belongs to the fatty acid desaturase type 2 family. In terms of assembly, homodimer. Fe(2+) is required as a cofactor.

It is found in the plastid. It localises to the chloroplast. It carries out the reaction octadecanoyl-[ACP] + 2 reduced [2Fe-2S]-[ferredoxin] + O2 + 2 H(+) = (9Z)-octadecenoyl-[ACP] + 2 oxidized [2Fe-2S]-[ferredoxin] + 2 H2O. Its pathway is lipid metabolism; fatty acid metabolism. Converts stearoyl-ACP to oleoyl-ACP by introduction of a cis double bond between carbons 9 and 10 of the acyl chain. This Oryza sativa subsp. japonica (Rice) protein is Stearoyl-[acyl-carrier-protein] 9-desaturase 5, chloroplastic.